The following is a 464-amino-acid chain: Fumarate hydratase class II 1 (464 aa).

Substrate contacts are provided by residues 96–98 (SGT), 127–130 (HPND), 137–139 (SSN), and threonine 185. The Proton donor/acceptor role is filled by histidine 186. The active site involves serine 316. Substrate contacts are provided by residues serine 317 and 322–324 (KVN).

This sequence belongs to the class-II fumarase/aspartase family. Fumarase subfamily. As to quaternary structure, homotetramer.

The protein resides in the cytoplasm. It catalyses the reaction (S)-malate = fumarate + H2O. Its pathway is carbohydrate metabolism; tricarboxylic acid cycle; (S)-malate from fumarate: step 1/1. Its function is as follows. Involved in the TCA cycle. Catalyzes the stereospecific interconversion of fumarate to L-malate. In Pseudomonas aeruginosa (strain ATCC 15692 / DSM 22644 / CIP 104116 / JCM 14847 / LMG 12228 / 1C / PRS 101 / PAO1), this protein is Fumarate hydratase class II 1.